The primary structure comprises 429 residues: Serine hydroxymethyltransferase (429 aa).

Residues leucine 126 and 130–132 each bind (6S)-5,6,7,8-tetrahydrofolate; that span reads GHL. Lysine 235 carries the N6-(pyridoxal phosphate)lysine modification. 359–361 is a (6S)-5,6,7,8-tetrahydrofolate binding site; that stretch reads SPF.

Belongs to the SHMT family. As to quaternary structure, homodimer. The cofactor is pyridoxal 5'-phosphate.

The protein resides in the cytoplasm. The enzyme catalyses (6R)-5,10-methylene-5,6,7,8-tetrahydrofolate + glycine + H2O = (6S)-5,6,7,8-tetrahydrofolate + L-serine. The protein operates within one-carbon metabolism; tetrahydrofolate interconversion. It functions in the pathway amino-acid biosynthesis; glycine biosynthesis; glycine from L-serine: step 1/1. In terms of biological role, catalyzes the reversible interconversion of serine and glycine with tetrahydrofolate (THF) serving as the one-carbon carrier. This reaction serves as the major source of one-carbon groups required for the biosynthesis of purines, thymidylate, methionine, and other important biomolecules. Also exhibits THF-independent aldolase activity toward beta-hydroxyamino acids, producing glycine and aldehydes, via a retro-aldol mechanism. The polypeptide is Serine hydroxymethyltransferase (Parasynechococcus marenigrum (strain WH8102)).